The following is a 147-amino-acid chain: D-aminoacyl-tRNA deacylase (147 aa).

Residues glycine 136–proline 137 carry the Gly-cisPro motif, important for rejection of L-amino acids motif.

The protein belongs to the DTD family. As to quaternary structure, homodimer.

It is found in the cytoplasm. The catalysed reaction is glycyl-tRNA(Ala) + H2O = tRNA(Ala) + glycine + H(+). The enzyme catalyses a D-aminoacyl-tRNA + H2O = a tRNA + a D-alpha-amino acid + H(+). Its function is as follows. An aminoacyl-tRNA editing enzyme that deacylates mischarged D-aminoacyl-tRNAs. Also deacylates mischarged glycyl-tRNA(Ala), protecting cells against glycine mischarging by AlaRS. Acts via tRNA-based rather than protein-based catalysis; rejects L-amino acids rather than detecting D-amino acids in the active site. By recycling D-aminoacyl-tRNA to D-amino acids and free tRNA molecules, this enzyme counteracts the toxicity associated with the formation of D-aminoacyl-tRNA entities in vivo and helps enforce protein L-homochirality. This chain is D-aminoacyl-tRNA deacylase, found in Streptococcus pneumoniae serotype 4 (strain ATCC BAA-334 / TIGR4).